We begin with the raw amino-acid sequence, 428 residues long: Spermidine/putrescine import ATP-binding protein PotA (428 aa).

Residues 6–238 form the ABC transporter domain; sequence IEFKNVSKTY…PINHFVADFI (233 aa). Position 40–47 (40–47) interacts with ATP; it reads GASGSGKS.

This sequence belongs to the ABC transporter superfamily. Spermidine/putrescine importer (TC 3.A.1.11.1) family. The complex is composed of two ATP-binding proteins (PotA), two transmembrane proteins (PotB and PotC) and a solute-binding protein (PotD).

It localises to the cell membrane. It carries out the reaction ATP + H2O + polyamine-[polyamine-binding protein]Side 1 = ADP + phosphate + polyamineSide 2 + [polyamine-binding protein]Side 1.. Part of the ABC transporter complex PotABCD involved in spermidine/putrescine import. Responsible for energy coupling to the transport system. This Lactococcus lactis subsp. lactis (strain IL1403) (Streptococcus lactis) protein is Spermidine/putrescine import ATP-binding protein PotA.